The chain runs to 519 residues: Bifunctional purine biosynthesis protein PurH (519 aa).

Positions 1 to 145 constitute an MGS-like domain; sequence MQPIQRALIS…KNHASVTVVV (145 aa).

The protein belongs to the PurH family.

The enzyme catalyses (6R)-10-formyltetrahydrofolate + 5-amino-1-(5-phospho-beta-D-ribosyl)imidazole-4-carboxamide = 5-formamido-1-(5-phospho-D-ribosyl)imidazole-4-carboxamide + (6S)-5,6,7,8-tetrahydrofolate. It catalyses the reaction IMP + H2O = 5-formamido-1-(5-phospho-D-ribosyl)imidazole-4-carboxamide. It participates in purine metabolism; IMP biosynthesis via de novo pathway; 5-formamido-1-(5-phospho-D-ribosyl)imidazole-4-carboxamide from 5-amino-1-(5-phospho-D-ribosyl)imidazole-4-carboxamide (10-formyl THF route): step 1/1. Its pathway is purine metabolism; IMP biosynthesis via de novo pathway; IMP from 5-formamido-1-(5-phospho-D-ribosyl)imidazole-4-carboxamide: step 1/1. The protein is Bifunctional purine biosynthesis protein PurH of Allochromatium vinosum (strain ATCC 17899 / DSM 180 / NBRC 103801 / NCIMB 10441 / D) (Chromatium vinosum).